The sequence spans 204 residues: Ribosomal RNA small subunit methyltransferase G (204 aa).

S-adenosyl-L-methionine contacts are provided by residues G76, L81, 127 to 128 (IE), and R140.

This sequence belongs to the methyltransferase superfamily. RNA methyltransferase RsmG family.

It localises to the cytoplasm. It carries out the reaction guanosine(527) in 16S rRNA + S-adenosyl-L-methionine = N(7)-methylguanosine(527) in 16S rRNA + S-adenosyl-L-homocysteine. In terms of biological role, specifically methylates the N7 position of guanine in position 527 of 16S rRNA. This chain is Ribosomal RNA small subunit methyltransferase G, found in Francisella philomiragia subsp. philomiragia (strain ATCC 25017 / CCUG 19701 / FSC 153 / O#319-036).